Reading from the N-terminus, the 472-residue chain is MDLARSSIKLFIANIFGAGLQFLGITFFARELGASQMGVFFLFQALLGIVAIPADFGLRGAVEKRISEGIQPGEYLSSAIILKLIPISLIILSIVVFEQRINGYLGGDFAVYLALAIILQETAQLAVSVLKGELRVGETAELNIIRRITWVGGGFLLVSSGLDAEALIYSLLAGMVVTLAWGLSKISTSLKKPSFKNARSLFNYSKYSVVSSIGGYFYSWMDVAIIGIFLTQSHVGAYETAWRVTAITMLFSQAVASTIFPQVSQWSSKNEQQQIESVISNSITPSMLLVIPAFFGILVFSDEIMGIVFGSEFTIASYVLIILAGEKILQSVHVIIGRSLQALNQPGLAARATVISVVLNLILNVILILSFGIVGAAVATALSFAVNTVLHAHYLSSFVSIKFQYSQIGWCTVSSLIMAGVLFGFKTLVGVNSLIQLFIGIFFGMLVYTTITLLYQPIRETAFKNLIRLVPI.

A run of 13 helical transmembrane segments spans residues 8 to 28 (IKLF…ITFF), 38 to 58 (GVFF…DFGL), 77 to 97 (SSAI…IVVF), 109 to 129 (FAVY…AVSV), 164 to 184 (AEAL…WGLS), 209 to 229 (VVSS…IGIF), 244 to 264 (VTAI…PQVS), 289 to 309 (LVIP…GIVF), 315 to 335 (IASY…VHVI), 354 to 374 (VISV…FGIV), 375 to 395 (GAAV…AHYL), 408 to 428 (IGWC…FKTL), and 434 to 454 (LIQL…ITLL).

The protein belongs to the AglR/Agl15 family.

The protein resides in the cell membrane. Its pathway is protein modification; protein glycosylation. The protein operates within cell surface structure biogenesis; S-layer biogenesis. In terms of biological role, flippase involved in N-glycan biosynthetic pathway that takes place under low-salt conditions (1.75 M instead of 3.4 M). Participates in the formation of the tetrasaccharide present at 'Asn-532' of S-layer glycoprotein Csg, consisting of a sulfated hexose, 2 hexoses and rhamnose. Probably moves the tetrasaccharide from the cytosolic to the extracytosolic side of the membrane. This Haloferax volcanii (strain ATCC 29605 / DSM 3757 / JCM 8879 / NBRC 14742 / NCIMB 2012 / VKM B-1768 / DS2) (Halobacterium volcanii) protein is Probable low-salt glycan biosynthesis flippase Agl15 (agl15).